Consider the following 397-residue polypeptide: Enoyl-[acyl-carrier-protein] reductase [NADH] (397 aa).

Residues 48-53, 74-75, 111-112, and 139-140 contribute to the NAD(+) site; these read GASTGY, FE, DA, and VA. Tyr225 contacts substrate. The active-site Proton donor is the Tyr235. Residues Lys244 and 273–275 each bind NAD(+); that span reads VVT.

This sequence belongs to the TER reductase family. As to quaternary structure, monomer.

It catalyses the reaction a 2,3-saturated acyl-[ACP] + NAD(+) = a (2E)-enoyl-[ACP] + NADH + H(+). It functions in the pathway lipid metabolism; fatty acid biosynthesis. Its function is as follows. Involved in the final reduction of the elongation cycle of fatty acid synthesis (FAS II). Catalyzes the reduction of a carbon-carbon double bond in an enoyl moiety that is covalently linked to an acyl carrier protein (ACP). This is Enoyl-[acyl-carrier-protein] reductase [NADH] from Burkholderia thailandensis (strain ATCC 700388 / DSM 13276 / CCUG 48851 / CIP 106301 / E264).